Consider the following 593-residue polypeptide: Aspartate--tRNA(Asp/Asn) ligase (593 aa).

Glu176 is a binding site for L-aspartate. The tract at residues 200 to 203 (QIFK) is aspartate. An L-aspartate-binding site is contributed by Arg222. Residues 222 to 224 (RDE) and Gln231 each bind ATP. His450 contacts L-aspartate. Glu490 is an ATP binding site. Arg497 lines the L-aspartate pocket. 542-545 (GLDR) provides a ligand contact to ATP.

It belongs to the class-II aminoacyl-tRNA synthetase family. Type 1 subfamily. In terms of assembly, homodimer.

The protein localises to the cytoplasm. It carries out the reaction tRNA(Asx) + L-aspartate + ATP = L-aspartyl-tRNA(Asx) + AMP + diphosphate. Functionally, aspartyl-tRNA synthetase with relaxed tRNA specificity since it is able to aspartylate not only its cognate tRNA(Asp) but also tRNA(Asn). Reaction proceeds in two steps: L-aspartate is first activated by ATP to form Asp-AMP and then transferred to the acceptor end of tRNA(Asp/Asn). The protein is Aspartate--tRNA(Asp/Asn) ligase of Symbiobacterium thermophilum (strain DSM 24528 / JCM 14929 / IAM 14863 / T).